A 493-amino-acid polypeptide reads, in one-letter code: Galactose-1-phosphate uridylyltransferase 2 (493 aa).

Belongs to the galactose-1-phosphate uridylyltransferase type 2 family.

It localises to the cytoplasm. The enzyme catalyses alpha-D-galactose 1-phosphate + UDP-alpha-D-glucose = alpha-D-glucose 1-phosphate + UDP-alpha-D-galactose. Its pathway is carbohydrate metabolism; galactose metabolism. The chain is Galactose-1-phosphate uridylyltransferase 2 (galT2) from Streptococcus pneumoniae (strain ATCC BAA-255 / R6).